Consider the following 185-residue polypeptide: Ribosome-recycling factor (185 aa).

It belongs to the RRF family.

It is found in the cytoplasm. Functionally, responsible for the release of ribosomes from messenger RNA at the termination of protein biosynthesis. May increase the efficiency of translation by recycling ribosomes from one round of translation to another. The polypeptide is Ribosome-recycling factor (Alteromonas mediterranea (strain DSM 17117 / CIP 110805 / LMG 28347 / Deep ecotype)).